The sequence spans 323 residues: MAAQVEIEDQTSVTNLDNGEIFDSISDDADSSVSHAGSSFSSSSLILLGEGNPEHDVIKTCLLSGMGVVSSDTTIVTISKNSSERGITTRAKFLAFRIFTDAVARKHGGDANVKYGWYAGSRDEIQRIISYGFSNRDVGKFENDGGSHGIGIHLVPSKCSLLAASATEQDEEGLRYLLLCRVILGKPEIIISGSKQSYPSSAEFDSGVDDLHNPRNYVIWSCNMNSCILPSYIVSFRSPRLRVSRGGFASRPSSPWVSFASLMSMLSTSMDPSRMNLIIRTYDDFRKRKIRRDQLVRKMREVAGDNLLAEIIKNHKNRNKVTN.

The region spanning 31-257 is the PARP catalytic domain; it reads SSVSHAGSSF…FASRPSSPWV (227 aa). The 72-residue stretch at 250 to 321 folds into the RST domain; the sequence is SRPSSPWVSF…IKNHKNRNKV (72 aa).

As to quaternary structure, interacts with STO.

It is found in the nucleus. Functionally, probable inactive ADP-ribosyltransferase that may be involved in stress and developmental responses. The polypeptide is Probable inactive poly [ADP-ribose] polymerase SRO2 (SRO2) (Arabidopsis thaliana (Mouse-ear cress)).